The chain runs to 488 residues: MELIREARPHGREKLRANLIEWFHWLLREAELYDVRYPVKGAYVWRPYGMRLRRHVEELIRRSHDETGHQEVLFPVFIPYEFFGKESQHIRGFEKEVFWVSKGGEEGERLVLRPTSETAIMPMVKLWVHDYKDLPLRLYQIVSVFRAETKMTHPMIRLREISMFKEAHTVHVDREDAERQVREAVEIYKKIFDEMCLAYMINKRPDWDKFAGAEYTIAFDTVLPDGRTLQIGTVHYLGTNFTRVFEVTYLAADGTRRLAHTTSYGISERSIAAMLITHGDDAGTVLPPRLAPIQVVIVPIFYGEEEAASVISYAREVEKALREAGMRVHIDDRPDKTPGWKFYFWELKGVPLRVEVGKRDLEKRQVVITRRDTLEKYAVGLGELVDAVRGLMRTVEENLRRRAWEELRSRIVRAETVEAAKAAIREGKVVEVPWSGDNDCGIKLKDLVGADALGVPLDSDASVGGFDLRDLACGEKRAEFWLRLSERY.

Belongs to the class-II aminoacyl-tRNA synthetase family. ProS type 3 subfamily. In terms of assembly, homodimer.

Its subcellular location is the cytoplasm. It carries out the reaction tRNA(Pro) + L-proline + ATP = L-prolyl-tRNA(Pro) + AMP + diphosphate. Functionally, catalyzes the attachment of proline to tRNA(Pro) in a two-step reaction: proline is first activated by ATP to form Pro-AMP and then transferred to the acceptor end of tRNA(Pro). This is Proline--tRNA ligase from Pyrobaculum arsenaticum (strain DSM 13514 / JCM 11321 / PZ6).